An 81-amino-acid chain; its full sequence is Acyl carrier protein 2 (81 aa).

One can recognise a Carrier domain in the interval 1–79 (MTETEILERI…DVIGAVQSLL (79 aa)). Residue Ser39 is modified to O-(pantetheine 4'-phosphoryl)serine.

The protein belongs to the acyl carrier protein (ACP) family. In terms of processing, 4'-phosphopantetheine is transferred from CoA to a specific serine of apo-ACP by AcpS. This modification is essential for activity because fatty acids are bound in thioester linkage to the sulfhydryl of the prosthetic group.

It is found in the cytoplasm. The protein operates within lipid metabolism; fatty acid biosynthesis. Its function is as follows. Carrier of the growing fatty acid chain in fatty acid biosynthesis. The sequence is that of Acyl carrier protein 2 from Ralstonia nicotianae (strain ATCC BAA-1114 / GMI1000) (Ralstonia solanacearum).